A 109-amino-acid chain; its full sequence is MVKKIQESKEKKALKAASGTRKDKKKWGDGRKKEEVRRAVTVSEELLAKVRKDVGRASVVTRYMIGSRYNLNLGVAENVLRHLSNEGVVQQVLGNRRMTIYAGCRAQEQ.

A compositionally biased stretch (basic and acidic residues) spans 1–13; that stretch reads MVKKIQESKEKKA. The tract at residues 1 to 34 is disordered; that stretch reads MVKKIQESKEKKALKAASGTRKDKKKWGDGRKKE.

This sequence belongs to the eukaryotic ribosomal protein eS25 family.

In Encephalitozoon cuniculi (strain GB-M1) (Microsporidian parasite), this protein is Small ribosomal subunit protein eS25 (RPS25-1).